We begin with the raw amino-acid sequence, 622 residues long: Dehydrogenase mpl7 (622 aa).

Residues 23 to 24 (TA), 44 to 45 (EA), and 102 to 105 (NFMS) each bind FAD. H554 serves as the catalytic Proton acceptor. Residues A582 and 593 to 594 (IM) each bind FAD.

This sequence belongs to the GMC oxidoreductase family. In terms of assembly, homodimer. It depends on FAD as a cofactor.

Its pathway is mycotoxin biosynthesis. Dehydrogenase; part of the gene cluster that mediates the biosynthesis of the mycotoxin citrinin, a hepato-nephrotoxic compound to humans due to inhibition of respiration complex III. The pathway begins with the synthesis of a keto-aldehyde intermediate by the citrinin PKS (pksCT) from successive condensations of 4 malonyl-CoA units, presumably with a simple acetyl-CoA starter unit. Release of the keto-aldehyde intermediate is consistent with the presence of the C-terminal reductive release domain. Mp11 collaborates with pksCT by catalyzing the hydrolysis of ACP-bound acyl intermediates to free the ACP from stalled intermediates. Mpl2 then catalyzes the oxidation of the C-12 methyl of the ketone intermediate to an alcohol intermediate which is further oxidized by the oxidoreductase mpl7 to produce a bisaldehyde intermediate. The fourth catalytic step is catalyzed by the mpl4 aldehyde dehydrogenase. The final transformation is the reduction of C-3 by mpl6 to provide the chemically stable citrinin nucleus. The protein is Dehydrogenase mpl7 of Monascus purpureus (Red mold).